A 209-amino-acid chain; its full sequence is Small ribosomal subunit protein uS4 (209 aa).

Residues 99-179 form the S4 RNA-binding domain; it reads GRLDSVAYRM…FPEWIEVDAK (81 aa).

Belongs to the universal ribosomal protein uS4 family. In terms of assembly, part of the 30S ribosomal subunit. Contacts protein S5. The interaction surface between S4 and S5 is involved in control of translational fidelity.

Functionally, one of the primary rRNA binding proteins, it binds directly to 16S rRNA where it nucleates assembly of the body of the 30S subunit. With S5 and S12 plays an important role in translational accuracy. The chain is Small ribosomal subunit protein uS4 from Azoarcus sp. (strain BH72).